The following is a 137-amino-acid chain: MPTINQLVRKPRKSKVEKPKSPALNVGYNSHKKVQTNVSSPQKRGVATRVGTMTPRKPNSALRKFARVRLSNLIEVTAYIPGIGHNLQEHSVVLLRGGRVKDLPGVRYHIVRGALDTAGVNDRKQGRSKYGTKRPKA.

The interval 1–57 (MPTINQLVRKPRKSKVEKPKSPALNVGYNSHKKVQTNVSSPQKRGVATRVGTMTPRK) is disordered. Residue D102 is modified to 3-methylthioaspartic acid.

The protein belongs to the universal ribosomal protein uS12 family. In terms of assembly, part of the 30S ribosomal subunit. Contacts proteins S8 and S17. May interact with IF1 in the 30S initiation complex.

Functionally, with S4 and S5 plays an important role in translational accuracy. In terms of biological role, interacts with and stabilizes bases of the 16S rRNA that are involved in tRNA selection in the A site and with the mRNA backbone. Located at the interface of the 30S and 50S subunits, it traverses the body of the 30S subunit contacting proteins on the other side and probably holding the rRNA structure together. The combined cluster of proteins S8, S12 and S17 appears to hold together the shoulder and platform of the 30S subunit. The polypeptide is Small ribosomal subunit protein uS12 (Streptococcus pneumoniae (strain Hungary19A-6)).